Reading from the N-terminus, the 322-residue chain is Phosphoenolpyruvate transferase (322 aa).

Residue Asp-58 coordinates 7,8-didemethyl-8-hydroxy-5-deazariboflavin.

Belongs to the CofD family. As to quaternary structure, homodimer. Requires Mg(2+) as cofactor.

It carries out the reaction enolpyruvoyl-2-diphospho-5'-guanosine + 7,8-didemethyl-8-hydroxy-5-deazariboflavin = dehydro coenzyme F420-0 + GMP + H(+). It functions in the pathway cofactor biosynthesis; coenzyme F420 biosynthesis. Functionally, catalyzes the transfer of the phosphoenolpyruvate moiety from enoylpyruvoyl-2-diphospho-5'-guanosine (EPPG) to 7,8-didemethyl-8-hydroxy-5-deazariboflavin (FO) with the formation of dehydro coenzyme F420-0 and GMP. The polypeptide is Phosphoenolpyruvate transferase (Thermobifida fusca (strain YX)).